The chain runs to 1465 residues: DNA polymerase alpha catalytic subunit (1465 aa).

Disordered regions lie at residues 20-39 (GSFA…GRQE) and 105-135 (LEDD…PSVT). A compositionally biased stretch (basic residues) spans 26–35 (RARREKKSKK). Threonine 180 is modified (phosphothreonine). Residues serine 192 and serine 215 each carry the phosphoserine modification. Lysine 230 is subject to N6-acetyllysine. Residues 261 to 297 (DESMDTEKVDEKPVTAKTWDQETEPVERVEHEADPER) form a disordered region. Composition is skewed to basic and acidic residues over residues 265–274 (DTEKVDEKPV) and 285–297 (PVER…DPER). The tract at residues 654 to 719 (RINECKVPYW…YHLSELVQQI (66 aa)) is DNA-binding. Lysine 974 carries the N6-succinyllysine modification. The tract at residues 1249–1380 (QFRVHQYHKD…NGPLCPVCMK (132 aa)) is DNA-binding. Residues cysteine 1287, cysteine 1290, cysteine 1314, cysteine 1319, cysteine 1352, cysteine 1357, cysteine 1375, and cysteine 1378 each contribute to the Zn(2+) site. Residues 1287–1317 (CPSCGTENIYDNVFEGSGLDMEPSLYRCSNV) form a CysA-type zinc finger. The short motif at 1352-1378 (CEEPTCCSRLRRLPLHFSRNGPLCPVC) is the CysB motif element.

It belongs to the DNA polymerase type-B family. In terms of assembly, component of the alpha DNA polymerase complex (also known as the alpha DNA polymerase-primase complex) consisting of four subunits: the catalytic subunit POLA1, the regulatory subunit POLA2, and the primase complex subunits PRIM1 and PRIM2 respectively. Within the complex, POLA1 directly interacts with PRIM2. Interacts with PARP1; this interaction functions as part of the control of replication fork progression. Interacts with MCM10 and WDHD1; these interactions recruit the polymerase alpha complex to the pre-replicative complex bound to DNA. Interacts with RPA1; this interaction stabilizes the replicative complex and reduces the misincorporation rate of DNA polymerase alpha by acting as a fidelity clamp. As to expression, expressed in those zones containing proliferating cells in the developing embryonic neocortex, as well as in the lateral and medial ganglionic eminences. After birth, expressed in cells that remain proliferating in the ventricular and subventricular zone of the striatum.

The protein localises to the nucleus. Its subcellular location is the cytoplasm. It is found in the cytosol. It catalyses the reaction DNA(n) + a 2'-deoxyribonucleoside 5'-triphosphate = DNA(n+1) + diphosphate. Its function is as follows. Catalytic subunit of the DNA polymerase alpha complex (also known as the alpha DNA polymerase-primase complex) which plays an essential role in the initiation of DNA synthesis. During the S phase of the cell cycle, the DNA polymerase alpha complex (composed of a catalytic subunit POLA1, a regulatory subunit POLA2 and two primase subunits PRIM1 and PRIM2) is recruited to DNA at the replicative forks via direct interactions with MCM10 and WDHD1. The primase subunit of the polymerase alpha complex initiates DNA synthesis by oligomerising short RNA primers on both leading and lagging strands. These primers are initially extended by the polymerase alpha catalytic subunit and subsequently transferred to polymerase delta and polymerase epsilon for processive synthesis on the lagging and leading strand, respectively. The reason this transfer occurs is because the polymerase alpha has limited processivity and lacks intrinsic 3' exonuclease activity for proofreading error, and therefore is not well suited for replicating long complexes. In the cytosol, responsible for a substantial proportion of the physiological concentration of cytosolic RNA:DNA hybrids, which are necessary to prevent spontaneous activation of type I interferon responses. The chain is DNA polymerase alpha catalytic subunit (Pola1) from Mus musculus (Mouse).